A 371-amino-acid polypeptide reads, in one-letter code: Histidinol-phosphate aminotransferase (371 aa).

The residue at position 227 (K227) is an N6-(pyridoxal phosphate)lysine.

The protein belongs to the class-II pyridoxal-phosphate-dependent aminotransferase family. Histidinol-phosphate aminotransferase subfamily. Homodimer. Pyridoxal 5'-phosphate serves as cofactor.

The catalysed reaction is L-histidinol phosphate + 2-oxoglutarate = 3-(imidazol-4-yl)-2-oxopropyl phosphate + L-glutamate. Its pathway is amino-acid biosynthesis; L-histidine biosynthesis; L-histidine from 5-phospho-alpha-D-ribose 1-diphosphate: step 7/9. This chain is Histidinol-phosphate aminotransferase, found in Sphingopyxis alaskensis (strain DSM 13593 / LMG 18877 / RB2256) (Sphingomonas alaskensis).